We begin with the raw amino-acid sequence, 206 residues long: Adenylyl-sulfate kinase (206 aa).

36–43 (GLSGSGKS) is a binding site for ATP. Ser-110 functions as the Phosphoserine intermediate in the catalytic mechanism.

The protein belongs to the APS kinase family.

The enzyme catalyses adenosine 5'-phosphosulfate + ATP = 3'-phosphoadenylyl sulfate + ADP + H(+). The protein operates within sulfur metabolism; hydrogen sulfide biosynthesis; sulfite from sulfate: step 2/3. In terms of biological role, catalyzes the synthesis of activated sulfate. In Buchnera aphidicola subsp. Acyrthosiphon pisum (strain APS) (Acyrthosiphon pisum symbiotic bacterium), this protein is Adenylyl-sulfate kinase (cysC).